A 626-amino-acid chain; its full sequence is Carnitine O-acetyltransferase (626 aa).

Position 93 is an N6-succinyllysine (Lys-93). An N6-acetyllysine; alternate modification is found at Lys-261. Lys-261 carries the N6-succinyllysine; alternate modification. Lys-268 carries the N6-acetyllysine modification. The active-site Proton acceptor is the His-343. CoA-binding positions include Lys-419 and 423 to 430; that span reads KSEKLSPD. 2 residues coordinate (R)-carnitine: Tyr-452 and Ser-454. Ser-456 is a binding site for CoA. Thr-465 is a binding site for (R)-carnitine. CoA-binding residues include Arg-504 and Gln-555. The Microbody targeting signal signature appears at 624-626; the sequence is AKL.

Belongs to the carnitine/choline acetyltransferase family. Monomer. Mostly in skeletal muscle, less in heart, liver and pancreas, only weakly detectable in brain, placenta, lung and kidney.

Its subcellular location is the endoplasmic reticulum. It is found in the peroxisome. It localises to the mitochondrion inner membrane. The protein resides in the mitochondrion. It catalyses the reaction (R)-carnitine + acetyl-CoA = O-acetyl-(R)-carnitine + CoA. The catalysed reaction is propanoyl-CoA + (R)-carnitine = O-propanoyl-(R)-carnitine + CoA. The enzyme catalyses butanoyl-CoA + (R)-carnitine = O-butanoyl-(R)-carnitine + CoA. It carries out the reaction hexanoyl-CoA + (R)-carnitine = O-hexanoyl-(R)-carnitine + CoA. It catalyses the reaction octanoyl-CoA + (R)-carnitine = O-octanoyl-(R)-carnitine + CoA. The catalysed reaction is decanoyl-CoA + (R)-carnitine = O-decanoyl-(R)-carnitine + CoA. The enzyme catalyses 3-methylbutanoyl-CoA + (R)-carnitine = O-3-methylbutanoyl-(R)-carnitine + CoA. It carries out the reaction 2-methylpropanoyl-CoA + (R)-carnitine = O-isobutanoyl-(R)-carnitine + CoA. It catalyses the reaction 2-methylbutanoyl-CoA + (R)-carnitine = O-2-methylbutanoyl-(R)-carnitine + CoA. The catalysed reaction is acetoacetyl-CoA + (R)-carnitine = O-3-oxobutanoyl-(R)-carnitine + CoA. The enzyme catalyses 3-hydroxybutanoyl-CoA + (R)-carnitine = O-3-hydroxybutanoyl-(R)-carnitine + CoA. It carries out the reaction 4,8-dimethylnonanoyl-CoA + (R)-carnitine = O-4,8-dimethylnonanoyl-(R)-carnitine + CoA. It catalyses the reaction 2,6-dimethylheptanoyl-CoA + (R)-carnitine = O-2,6-dimethylheptanoyl-(R)-carnitine + CoA. Catalyzes the reversible transfer of acyl groups from carnitine to coenzyme A (CoA) and regulates the acyl-CoA/CoA ratio. Also plays a crucial role in the transport of fatty acids for beta-oxidation. Responsible for the synthesis of short- and branched-chain acylcarnitines. Active towards some branched-chain amino acid oxidation pathway (BCAAO) intermediates. Trans-2-enoyl-CoAs and 2-methylacyl-CoAs are poor substrates. In Homo sapiens (Human), this protein is Carnitine O-acetyltransferase.